The following is a 206-amino-acid chain: Large ribosomal subunit protein uL4 (206 aa).

It belongs to the universal ribosomal protein uL4 family. In terms of assembly, part of the 50S ribosomal subunit.

In terms of biological role, one of the primary rRNA binding proteins, this protein initially binds near the 5'-end of the 23S rRNA. It is important during the early stages of 50S assembly. It makes multiple contacts with different domains of the 23S rRNA in the assembled 50S subunit and ribosome. Forms part of the polypeptide exit tunnel. The chain is Large ribosomal subunit protein uL4 from Bradyrhizobium sp. (strain ORS 278).